The primary structure comprises 151 residues: MKLLILALCFAAASALTADQISTVQSSFAGVKGDAVGILYAVFKADPSIQAKFTQFAGKDLDSIKGSADFSAHANKIVGFFSKIIGDLPNIDGDVTTFVASHTPRGVTHDQLNNFRAGFVSYMKAHTDFAGAEAAWGATLDAFFGMVFAKM.

The signal sequence occupies residues 1 to 15; sequence MKLLILALCFAAASA. A Globin domain is found at 16 to 151; it reads LTADQISTVQ…AFFGMVFAKM (136 aa). Heme b is bound at residue His-102.

The protein belongs to the globin family. Monomer.

In Chironomus thummi thummi (Midge), this protein is Globin CTT-IV (D).